The sequence spans 425 residues: Aromatic prenyl transferase PC-22 (425 aa).

L-tryptophan is bound by residues 83–84 and Glu-92; that span reads GI. 9 residues coordinate substrate: Arg-107, Lys-198, Tyr-200, Arg-265, Lys-267, Tyr-269, Tyr-345, Tyr-410, and Tyr-414.

It belongs to the tryptophan dimethylallyltransferase family. Homodimer.

The protein operates within secondary metabolite biosynthesis. Functionally, aromatic prenyl transferase; part of the gene cluster that mediates the biosynthesis of the indole diterpenes penitrems. The geranylgeranyl diphosphate (GGPP) synthase penG catalyzes the first step in penitrem biosynthesis via conversion of farnesyl pyrophosphate and isopentyl pyrophosphate into geranylgeranyl pyrophosphate (GGPP). Condensation of indole-3-glycerol phosphate with GGPP by the prenyl transferase penC then forms 3-geranylgeranylindole (3-GGI). Epoxidation by the FAD-dependent monooxygenase penM leads to a epoxidized-GGI that is substrate of the terpene cyclase penB for cyclization to yield paspaline. Paspaline is subsequently converted to 13-desoxypaxilline by the cytochrome P450 monooxygenase penP, the latter being then converted to paxilline by the cytochrome P450 monooxygenase penQ. Paxilline is converted to beta-paxitriol via C-10 ketoreduction by the short-chain dehydrogenase PC-15 which can be monoprenylated at the C-20 by the indole diterpene prenyltransferase penD. A two-step elimination (acetylation and elimination) process performed by the O-acetyltransferase PC-16 and the P.simplicissimum ptmI-ortholog not yet identified in P.crustosum, leads to the production of the prenylated form of penijanthine. The FAD-linked oxidoreductase ptmO then converts the prenylated form of penijanthine into PC-M5 which is in turn transformed into PC-M4 by the aromatic dimethylallyltransferase PC-22. A series of oxidation steps involving 4 cytochrome P450 monooxygenases (PC-21, PC-05, PC-23, PC-20) and a FAD-dependent monooxygenase (PC-14) are required for the transformation of PC-M4 to penitrems A and E. Synthesis of these final products is proposed to proceed via penitrems D and C (PC-21, PC-05, PC-14) and penitrems B and F (PC-21, PC-05, PC-14, PC-23). The chain is Aromatic prenyl transferase PC-22 from Penicillium crustosum (Blue mold fungus).